Here is an 835-residue protein sequence, read N- to C-terminus: Protein translocase subunit SecA (835 aa).

Residues Gln-85, 103–107 (GEGKT), and Asp-492 contribute to the ATP site. Residues 788 to 807 (VQGEAVHPSSDGEEAKKKPV) are disordered. Residues Cys-819, Cys-821, Cys-830, and Cys-831 each coordinate Zn(2+).

It belongs to the SecA family. As to quaternary structure, monomer and homodimer. Part of the essential Sec protein translocation apparatus which comprises SecA, SecYEG and auxiliary proteins SecDF. Other proteins may also be involved. Requires Zn(2+) as cofactor.

The protein resides in the cell membrane. Its subcellular location is the cytoplasm. The catalysed reaction is ATP + H2O + cellular proteinSide 1 = ADP + phosphate + cellular proteinSide 2.. Functionally, part of the Sec protein translocase complex. Interacts with the SecYEG preprotein conducting channel. Has a central role in coupling the hydrolysis of ATP to the transfer of proteins into and across the cell membrane, serving as an ATP-driven molecular motor driving the stepwise translocation of polypeptide chains across the membrane. This chain is Protein translocase subunit SecA, found in Bacillus cereus (strain G9842).